A 334-amino-acid chain; its full sequence is Heat-inducible transcription repressor HrcA (334 aa).

The protein belongs to the HrcA family.

In terms of biological role, negative regulator of class I heat shock genes (grpE-dnaK-dnaJ and groELS operons). Prevents heat-shock induction of these operons. The chain is Heat-inducible transcription repressor HrcA from Verminephrobacter eiseniae (strain EF01-2).